The primary structure comprises 2924 residues: Zinc finger ZZ-type and EF-hand domain-containing protein 1 (2924 aa).

The segment at 1-41 (MGNAPSNSSEDEAAAAGGEGWSPHQDWAADSGTTPGPGPAA) is disordered. Gly2 carries the N-myristoyl glycine lipid modification. Over residues 28–41 (AADSGTTPGPGPAA) the composition is skewed to low complexity. Residues 111-146 (CSGEQFEEAFAQFDAEGDGTVDAENMLEALKNSSGA) form the EF-hand domain. The DOC domain maps to 226–405 (LVQKEKESPG…AIWYWSLLTS (180 aa)). Ser240 is subject to Phosphoserine. The segment covering 1452–1470 (HLQPLDRRQRTSSVVEEHF) has biased composition (basic and acidic residues). The interval 1452–1527 (HLQPLDRRQR…STPTRRPPFT (76 aa)) is disordered. Positions 1472 to 1485 (GSASPTEAATPAAG) are enriched in low complexity. 3 positions are modified to phosphoserine: Ser1475, Ser1488, and Ser1509. Thr1510 is subject to Phosphothreonine. Positions 1514–1523 (PSPPSTPTRR) are enriched in pro residues. The residue at position 1515 (Ser1515) is a Phosphoserine. Residues Thr1519 and Thr1521 each carry the phosphothreonine modification. Phosphoserine occurs at positions 1535 and 1538. 2 ZZ-type zinc fingers span residues 1776-1831 (NVDI…FTCD) and 1825-1880 (NMEF…MVTI). Zn(2+) contacts are provided by Cys1781, Cys1784, Cys1795, Cys1798, Cys1804, Cys1807, His1817, His1821, Cys1830, Cys1833, Cys1844, Cys1847, Cys1853, Cys1856, His1866, and His1870. The interval 2388 to 2418 (DLELDERGDQEEELDRPVSSPGEAEQKKLDP) is disordered. Ser2407 is subject to Phosphoserine. The residue at position 2630 (Lys2630) is an N6-acetyllysine.

Interacts with KLF6 and KLF9. Interacts via (ZZ-type 2 zinc finger) with histone H3 trimethylated at 'Lys-4' (H3K4me3) and histone H3 acetylated at 'Lys-4' (H3K4ac).

Histone H3 reader which may act as a transcriptional coactivator for KLF6 and KLF9 transcription factors. The protein is Zinc finger ZZ-type and EF-hand domain-containing protein 1 (Zzef1) of Mus musculus (Mouse).